The following is an 822-amino-acid chain: Molybdenum cofactor sulfurase (822 aa).

N6-(pyridoxal phosphate)lysine is present on Lys239. Cys401 is an active-site residue. The interval 633 to 666 is disordered; it reads TRISNPTRSSRRSQRALMPGSFPEDPSPTSEQPP. Residues 643–820 enclose the MOSC domain; sequence RRSQRALMPG…VMVGDVVTPQ (178 aa).

Belongs to the class-V pyridoxal-phosphate-dependent aminotransferase family. MOCOS subfamily. Pyridoxal 5'-phosphate is required as a cofactor.

The catalysed reaction is Mo-molybdopterin + L-cysteine + AH2 = thio-Mo-molybdopterin + L-alanine + A + H2O. The protein operates within cofactor biosynthesis; molybdopterin biosynthesis. In terms of biological role, sulfurates the molybdenum cofactor. Sulfation of molybdenum is essential for xanthine dehydrogenase (XDH) and aldehyde oxidase (ADO) enzymes in which molybdenum cofactor is liganded by 1 oxygen and 1 sulfur atom in active form. The protein is Molybdenum cofactor sulfurase of Aspergillus oryzae (strain ATCC 42149 / RIB 40) (Yellow koji mold).